A 371-amino-acid polypeptide reads, in one-letter code: RNA-binding protein 48 (371 aa).

One can recognise an RRM domain in the interval 46 to 124; it reads QYLLIQGVPA…GLLHVCYAPE (79 aa). Disordered regions lie at residues 220 to 249 and 343 to 371; these read EHTD…AFPP and EVTS…RRRI.

It belongs to the RBM48 family. In terms of assembly, component of the minor spliceosome. Within this complex, interacts with ARMC7 and PRPF8/PRP8.

In terms of biological role, as a component of the minor spliceosome, involved in the splicing of U12-type introns in pre-mRNAs. This chain is RNA-binding protein 48 (Rbm48), found in Rattus norvegicus (Rat).